The primary structure comprises 256 residues: Indole-3-glycerol phosphate synthase (256 aa).

This sequence belongs to the TrpC family.

It carries out the reaction 1-(2-carboxyphenylamino)-1-deoxy-D-ribulose 5-phosphate + H(+) = (1S,2R)-1-C-(indol-3-yl)glycerol 3-phosphate + CO2 + H2O. The protein operates within amino-acid biosynthesis; L-tryptophan biosynthesis; L-tryptophan from chorismate: step 4/5. This chain is Indole-3-glycerol phosphate synthase, found in Pelodictyon phaeoclathratiforme (strain DSM 5477 / BU-1).